A 646-amino-acid polypeptide reads, in one-letter code: Peptidylprolyl isomerase domain and WD repeat-containing protein 1 (646 aa).

The interval 1 to 30 (MAAESGSDFQQRRRRRRDPEEPEKTELSER) is disordered. Ala2 carries the N-acetylalanine modification. Positions 17–30 (RDPEEPEKTELSER) are enriched in basic and acidic residues. WD repeat units lie at residues 80-118 (ASMY…FWKK), 124-162 (EFVK…VFDV), 168-208 (INML…IYDG), 213-252 (QPLH…YWTG), 271-309 (TDLY…IFRF), 345-386 (AVER…VETN), and 401-453 (MQLA…MFTK). Residues 455–478 (EPEDTKSADSDRDVFNEKPSKEEV) are compositionally biased toward basic and acidic residues. The disordered stretch occupies residues 455 to 490 (EPEDTKSADSDRDVFNEKPSKEEVMAATQAEGPKRV). The region spanning 490–645 (VSDSAIIHTS…EDVSIINITV (156 aa)) is the PPIase cyclophilin-type domain.

It belongs to the cyclophilin-type PPIase family. PPIL1 subfamily. Identified in the spliceosome C complex.

Its subcellular location is the nucleus. It carries out the reaction [protein]-peptidylproline (omega=180) = [protein]-peptidylproline (omega=0). Inhibited by cyclosporin A (CsA). In terms of biological role, PPIase that catalyzes the cis-trans isomerization of proline imidic peptide bonds in oligopeptides and may therefore assist protein folding. May be involved in pre-mRNA splicing. In Homo sapiens (Human), this protein is Peptidylprolyl isomerase domain and WD repeat-containing protein 1.